The following is a 398-amino-acid chain: Acetate kinase (398 aa).

N8 is a binding site for Mg(2+). K15 contacts ATP. Residue R89 coordinates substrate. D146 (proton donor/acceptor) is an active-site residue. Residues 206–210, 283–285, and 331–335 each bind ATP; these read HIGNG, DMR, and GMGEN. E383 serves as a coordination point for Mg(2+).

This sequence belongs to the acetokinase family. As to quaternary structure, homodimer. Requires Mg(2+) as cofactor. It depends on Mn(2+) as a cofactor.

The protein resides in the cytoplasm. It carries out the reaction acetate + ATP = acetyl phosphate + ADP. Its pathway is metabolic intermediate biosynthesis; acetyl-CoA biosynthesis; acetyl-CoA from acetate: step 1/2. Catalyzes the formation of acetyl phosphate from acetate and ATP. Can also catalyze the reverse reaction. This chain is Acetate kinase, found in Streptococcus pyogenes serotype M5 (strain Manfredo).